The sequence spans 679 residues: MESVGDPRDGPSTERAFEGQPVPPWTEQVTLRAVVASVALGVALSSVMMNLVFTSGIIPSLNISAGLLGFFLLKAWTRLLDQLGSPGRPFTRQENAVVQTCVVACASMTYSGGFGSYLLAMDRKTAEKTSTGDDSSASVSEPEFGRMMAFFFLVSFVGLLAIVPMRKTMIIRHRLTFPSGSATAHLINSFHTPHGARQAKRQVSLVLRSSLASLFWSIFQWFYTGGPNCGFTSFPTFGLSAFNRGFYISLNGTYVGIGMISPHLINVSMLFGSIISWGIMRPYIRSKRGIWYDADLQETNLKSFSGYKVFCAIAMILGDGIFQLVAISLRTIHTVRHHQVAAETLRSFSDVDAMPRPVMSFDDRRRTQVFLREHIPSTFAISGYVVLATVSTVVIPLMYGQVRYYHVAAAYAFAPVLAFCNAYGTGVAETNFSAQYNKLVILMFASWIGIKNGGIVGSLVICGIVSSIVSTASDFMSDFKTSYLTLTSPRATLVSQVIGTAMGCVVNPAVFTVFHHFYEMNPNKTYQAPLAKIYRGIAVLGAGGLELPKYCLAISATFFVLALAVCAMREVAAHGKWRAEPYIPSVTGMAVSFLLVPAVSIDMCIGSLIVFLWNRNDKLGSQVFGPVLASGLICGDGLFSIPYALLARYDVTPPICIRFLGRVQNDKLDAFLASKAKAG.

A compositionally biased stretch (basic and acidic residues) spans 1 to 17 (MESVGDPRDGPSTERAF). The tract at residues 1-21 (MESVGDPRDGPSTERAFEGQP) is disordered. A run of 14 helical transmembrane segments spans residues 29-49 (VTLRAVVASVALGVALSSVMM), 51-71 (LVFTSGIIPSLNISAGLLGFF), 101-121 (CVVACASMTYSGGFGSYLLAM), 144-164 (FGRMMAFFFLVSFVGLLAIVP), 211-231 (LASLFWSIFQWFYTGGPNCGF), 255-275 (VGIGMISPHLINVSMLFGSII), 309-329 (VFCAIAMILGDGIFQLVAISL), 379-399 (FAISGYVVLATVSTVVIPLMY), 407-427 (VAAAYAFAPVLAFCNAYGTGV), 441-461 (ILMFASWIGIKNGGIVGSLVI), 497-517 (VIGTAMGCVVNPAVFTVFHHF), 547-567 (LPKYCLAISATFFVLALAVCA), 593-613 (FLLVPAVSIDMCIGSLIVFLW), and 627-647 (VLASGLICGDGLFSIPYALLA).

This sequence belongs to the YSL (TC 2.A.67.2) family.

The protein localises to the membrane. May be involved in the transport of nicotianamine-chelated metals. The sequence is that of Probable metal-nicotianamine transporter YSL18 (YSL18) from Oryza sativa subsp. japonica (Rice).